Reading from the N-terminus, the 341-residue chain is MSVYSLKELAEHIGATSRGNTDVVVDSIAPLDKAQANQLTFISNAKFRPFLAQSQAGILVVSEADIEFCSANSNLLITKNPYVAYALLAQYMDTTPKAASDIASTAVIASSAKLGTNVSIGANAVIEDGVELGDNVVIGAGCFIGKNTKIGANTQLWANVSIYHEVQIGSDCLIQSGAVIGGDGFGYANERGQWIKIPQTGSVIIGNHVEIGACTCIDRGALDSTVIEDNVIIDNLCQIAHNVHIGTGTAVAGGVIMAGSLTVGRYCQIGGASVINGHMEICDQAIVTGMSMILRPITEPGIYSSGIPAQTNKEWRKTAALTLDIDKMNKRLKALEKKLAD.

Residue histidine 241 is the Proton acceptor of the active site.

The protein belongs to the transferase hexapeptide repeat family. LpxD subfamily. As to quaternary structure, homotrimer.

The catalysed reaction is a UDP-3-O-[(3R)-3-hydroxyacyl]-alpha-D-glucosamine + a (3R)-hydroxyacyl-[ACP] = a UDP-2-N,3-O-bis[(3R)-3-hydroxyacyl]-alpha-D-glucosamine + holo-[ACP] + H(+). Its pathway is bacterial outer membrane biogenesis; LPS lipid A biosynthesis. Its function is as follows. Catalyzes the N-acylation of UDP-3-O-acylglucosamine using 3-hydroxyacyl-ACP as the acyl donor. Is involved in the biosynthesis of lipid A, a phosphorylated glycolipid that anchors the lipopolysaccharide to the outer membrane of the cell. This is UDP-3-O-acylglucosamine N-acyltransferase from Mannheimia succiniciproducens (strain KCTC 0769BP / MBEL55E).